Consider the following 386-residue polypeptide: Bifunctional enzyme IspD/IspF (386 aa).

Residues 1–226 are 2-C-methyl-D-erythritol 4-phosphate cytidylyltransferase; sequence MATPSPLPSF…EDFMADLLPV (226 aa). The segment at 227-386 is 2-C-methyl-D-erythritol 2,4-cyclodiphosphate synthase; it reads RVGTGFDVHK…ATVVRKDTPA (160 aa). The a divalent metal cation site is built by D233 and H235. 4-CDP-2-C-methyl-D-erythritol 2-phosphate contacts are provided by residues 233–235 and 259–260; these read DVH and HS. A divalent metal cation is bound at residue H267. 4-CDP-2-C-methyl-D-erythritol 2-phosphate contacts are provided by residues 281 to 283, 357 to 360, F364, and R367; these read DIG and TTTE.

The protein in the N-terminal section; belongs to the IspD/TarI cytidylyltransferase family. IspD subfamily. It in the C-terminal section; belongs to the IspF family. Requires a divalent metal cation as cofactor.

It catalyses the reaction 2-C-methyl-D-erythritol 4-phosphate + CTP + H(+) = 4-CDP-2-C-methyl-D-erythritol + diphosphate. The catalysed reaction is 4-CDP-2-C-methyl-D-erythritol 2-phosphate = 2-C-methyl-D-erythritol 2,4-cyclic diphosphate + CMP. The protein operates within isoprenoid biosynthesis; isopentenyl diphosphate biosynthesis via DXP pathway; isopentenyl diphosphate from 1-deoxy-D-xylulose 5-phosphate: step 2/6. Its pathway is isoprenoid biosynthesis; isopentenyl diphosphate biosynthesis via DXP pathway; isopentenyl diphosphate from 1-deoxy-D-xylulose 5-phosphate: step 4/6. Its function is as follows. Bifunctional enzyme that catalyzes the formation of 4-diphosphocytidyl-2-C-methyl-D-erythritol from CTP and 2-C-methyl-D-erythritol 4-phosphate (MEP) (IspD), and catalyzes the conversion of 4-diphosphocytidyl-2-C-methyl-D-erythritol 2-phosphate (CDP-ME2P) to 2-C-methyl-D-erythritol 2,4-cyclodiphosphate (ME-CPP) with a corresponding release of cytidine 5-monophosphate (CMP) (IspF). This chain is Bifunctional enzyme IspD/IspF, found in Erythrobacter litoralis (strain HTCC2594).